A 475-amino-acid polypeptide reads, in one-letter code: Ribulose bisphosphate carboxylase large chain (475 aa).

Positions 1-2 are excised as a propeptide; that stretch reads MS. Pro-3 carries the post-translational modification N-acetylproline. Lys-14 carries the post-translational modification N6,N6,N6-trimethyllysine. Substrate is bound by residues Asn-123 and Thr-173. The Proton acceptor role is filled by Lys-175. Position 177 (Lys-177) interacts with substrate. Mg(2+) is bound by residues Lys-201, Asp-203, and Glu-204. Lys-201 is modified (N6-carboxylysine). The active-site Proton acceptor is the His-294. Arg-295, His-327, and Ser-379 together coordinate substrate.

It belongs to the RuBisCO large chain family. Type I subfamily. As to quaternary structure, heterohexadecamer of 8 large chains and 8 small chains; disulfide-linked. The disulfide link is formed within the large subunit homodimers. Requires Mg(2+) as cofactor. Post-translationally, the disulfide bond which can form in the large chain dimeric partners within the hexadecamer appears to be associated with oxidative stress and protein turnover.

It localises to the plastid. The protein resides in the chloroplast. The catalysed reaction is 2 (2R)-3-phosphoglycerate + 2 H(+) = D-ribulose 1,5-bisphosphate + CO2 + H2O. It catalyses the reaction D-ribulose 1,5-bisphosphate + O2 = 2-phosphoglycolate + (2R)-3-phosphoglycerate + 2 H(+). Its function is as follows. RuBisCO catalyzes two reactions: the carboxylation of D-ribulose 1,5-bisphosphate, the primary event in carbon dioxide fixation, as well as the oxidative fragmentation of the pentose substrate in the photorespiration process. Both reactions occur simultaneously and in competition at the same active site. The sequence is that of Ribulose bisphosphate carboxylase large chain from Gossypium hirsutum (Upland cotton).